A 314-amino-acid polypeptide reads, in one-letter code: Olfactory receptor 1E5 (314 aa).

Over 1 to 25 (MMGQNQTSISDFLLLGLPIQPEQQN) the chain is Extracellular. A glycan (N-linked (GlcNAc...) asparagine) is linked at asparagine 5. Residues 26–49 (LCYALFLAMYLTTLLGNLLIIVLI) traverse the membrane as a helical segment. Residues 50 to 57 (RLDSHLHT) lie on the Cytoplasmic side of the membrane. Residues 58–79 (PMYLFLSNLSFSDLCFSSVTIP) traverse the membrane as a helical segment. Residues 80–100 (KLLQNMQNQDPSIPYADCLTQ) are Extracellular-facing. A disulfide bridge connects residues cysteine 97 and cysteine 189. A helical transmembrane segment spans residues 101–120 (MYFFLLFGDLESFLLVAMAY). Residues 121–139 (DRYVAICFPLHYTAIMSPM) are Cytoplasmic-facing. The helical transmembrane segment at 140–158 (LCLSLVALSWVLTTFHAML) threads the bilayer. Topologically, residues 159 to 196 (HTLLMARLCFCADNVIPHFFCDMSALLKLACSDTRVNE) are extracellular. The helical transmembrane segment at 197–219 (WVIFIMGGLIVVIPFLLILGSYA) threads the bilayer. The Cytoplasmic segment spans residues 220–236 (RIVSSILKVPSSKGICK). Residues 237-260 (AFSTCGSHLSVVSLFYGTIIGLYL) form a helical membrane-spanning segment. The Extracellular segment spans residues 261–272 (CPSANSSTLKET). A glycan (N-linked (GlcNAc...) asparagine) is linked at asparagine 265. The chain crosses the membrane as a helical span at residues 273-292 (VMAMMYTVVTPMLNPFIYSL). Topologically, residues 293–314 (RNRDMKGALERVIXKRKNPFLL) are cytoplasmic.

The protein belongs to the G-protein coupled receptor 1 family.

It is found in the cell membrane. Odorant receptor. This Pan troglodytes (Chimpanzee) protein is Olfactory receptor 1E5 (OR1E5).